A 533-amino-acid chain; its full sequence is Retinoid isomerohydrolase (533 aa).

The residue at position 2 (Ser2) is an N-acetylserine. A phosphothreonine mark is found at Thr101 and Thr105. The S-palmitoyl cysteine; in membrane form moiety is linked to residue Cys112. At Lys113 the chain carries N6-acetyllysine. Ser117 bears the Phosphoserine mark. Position 180 (His180) interacts with Fe cation. Cys231 carries the S-palmitoyl cysteine; in membrane form lipid modification. The Fe cation site is built by His241 and His313. S-palmitoyl cysteine; in membrane form attachment occurs at residues Cys329 and Cys330. His527 is a Fe cation binding site.

Belongs to the carotenoid oxygenase family. Interacts with MYO7A; this mediates light-dependent intracellular transport of RPE65. Fe(2+) serves as cofactor. Post-translationally, palmitoylation by LRAT regulates ligand binding specificity; the palmitoylated form (membrane form) specifically binds all-trans-retinyl-palmitate, while the soluble unpalmitoylated form binds all-trans-retinol (vitamin A). In terms of tissue distribution, retinal pigment epithelium specific.

The protein localises to the cytoplasm. It localises to the cell membrane. Its subcellular location is the microsome membrane. The enzyme catalyses an all-trans-retinyl ester + H2O = 11-cis-retinol + a fatty acid + H(+). It catalyses the reaction lutein = (3R,3'S)-zeaxanthin. It carries out the reaction all-trans-retinyl hexadecanoate + H2O = 11-cis-retinol + hexadecanoate + H(+). Functionally, critical isomerohydrolase in the retinoid cycle involved in regeneration of 11-cis-retinal, the chromophore of rod and cone opsins. Catalyzes the cleavage and isomerization of all-trans-retinyl fatty acid esters to 11-cis-retinol which is further oxidized by 11-cis retinol dehydrogenase to 11-cis-retinal for use as visual chromophore. Essential for the production of 11-cis retinal for both rod and cone photoreceptors. Also capable of catalyzing the isomerization of lutein to meso-zeaxanthin an eye-specific carotenoid. The soluble form binds vitamin A (all-trans-retinol), making it available for LRAT processing to all-trans-retinyl ester. The membrane form, palmitoylated by LRAT, binds all-trans-retinyl esters, making them available for IMH (isomerohydrolase) processing to all-cis-retinol. The soluble form is regenerated by transferring its palmitoyl groups onto 11-cis-retinol, a reaction catalyzed by LRAT. The polypeptide is Retinoid isomerohydrolase (RPE65) (Chlorocebus aethiops (Green monkey)).